We begin with the raw amino-acid sequence, 346 residues long: MAKRKLTQNQTRRIQSNNAKTLHRHKKKDIEWSDEMLGESQEGVVVTRYSIHADVENEQGEIYRCNLRRTLSSLVVGDKVVWRKGNEQLQGVSGVIEAIHPRENEISRPDYYDGLKPIAANIDRIIIVSAVLPTLSLNIIDRYLVVCEIAEIKPLIVLNKVDLLAQEQRQEIEDQLKIYQDIGYEILMISAKSGENMEKLTALLAQGTAIFVGQSGVGKSSLINHILPSVNAQVGDVSETSGLGQHTTTSSRLYHLPQGGNLIDSPGIREFGLWHLDAEQITKGYREFQYVLGTCKFRDCKHLSDPGCALREAVEQGKISPVRYDNYHRLIESLSETKSQRHFSLV.

The segment at 1-26 (MAKRKLTQNQTRRIQSNNAKTLHRHK) is disordered. The span at 7–20 (TQNQTRRIQSNNAK) shows a compositional bias: polar residues. One can recognise a CP-type G domain in the interval 103 to 271 (ENEISRPDYY…LIDSPGIREF (169 aa)). GTP is bound by residues 159 to 162 (NKVD) and 213 to 221 (GQSGVGKSS). 4 residues coordinate Zn(2+): cysteine 295, cysteine 300, histidine 302, and cysteine 308.

It belongs to the TRAFAC class YlqF/YawG GTPase family. RsgA subfamily. In terms of assembly, monomer. Associates with 30S ribosomal subunit, binds 16S rRNA. It depends on Zn(2+) as a cofactor.

It localises to the cytoplasm. Functionally, one of several proteins that assist in the late maturation steps of the functional core of the 30S ribosomal subunit. Helps release RbfA from mature subunits. May play a role in the assembly of ribosomal proteins into the subunit. Circularly permuted GTPase that catalyzes slow GTP hydrolysis, GTPase activity is stimulated by the 30S ribosomal subunit. The chain is Small ribosomal subunit biogenesis GTPase RsgA from Haemophilus influenzae (strain PittGG).